Here is a 543-residue protein sequence, read N- to C-terminus: Ribonuclease Y (543 aa).

Residues 4–24 (IIMIPVATAIVSLLVGTVTGY) form a helical membrane-spanning segment. Residues 233–296 (TVSVVDLPNE…EIAKRAMERL (64 aa)) enclose the KH domain. One can recognise an HD domain in the interval 359 to 452 (VLSHSIEVGK…VVAADTISSA (94 aa)).

This sequence belongs to the RNase Y family.

The protein resides in the cell membrane. Endoribonuclease that initiates mRNA decay. In Lactobacillus acidophilus (strain ATCC 700396 / NCK56 / N2 / NCFM), this protein is Ribonuclease Y.